The sequence spans 455 residues: Bifunctional protein GlmU (455 aa).

A pyrophosphorylase region spans residues 1-228; that stretch reads MYKCALVLAA…FEETIGVNSR (228 aa). Residues 8 to 11, Lys22, Gln73, and 78 to 79 contribute to the UDP-N-acetyl-alpha-D-glucosamine site; these read LAAG and GT. Position 103 (Asp103) interacts with Mg(2+). UDP-N-acetyl-alpha-D-glucosamine contacts are provided by Gly140, Glu154, Asn169, and Asn226. Asn226 is a binding site for Mg(2+). Residues 229–249 are linker; it reads AQLAQAEEILKDRINLKHMEN. The N-acetyltransferase stretch occupies residues 250–455; it reads GVTLIDPKTT…GWVDKKGLKK (206 aa). The UDP-N-acetyl-alpha-D-glucosamine site is built by Arg331 and Lys349. The active-site Proton acceptor is His361. UDP-N-acetyl-alpha-D-glucosamine-binding residues include Tyr364 and Asn375. Acetyl-CoA is bound by residues 384-385, Ala421, and Arg438; that span reads NY.

This sequence in the N-terminal section; belongs to the N-acetylglucosamine-1-phosphate uridyltransferase family. It in the C-terminal section; belongs to the transferase hexapeptide repeat family. Homotrimer. Mg(2+) is required as a cofactor.

It localises to the cytoplasm. It carries out the reaction alpha-D-glucosamine 1-phosphate + acetyl-CoA = N-acetyl-alpha-D-glucosamine 1-phosphate + CoA + H(+). The enzyme catalyses N-acetyl-alpha-D-glucosamine 1-phosphate + UTP + H(+) = UDP-N-acetyl-alpha-D-glucosamine + diphosphate. Its pathway is nucleotide-sugar biosynthesis; UDP-N-acetyl-alpha-D-glucosamine biosynthesis; N-acetyl-alpha-D-glucosamine 1-phosphate from alpha-D-glucosamine 6-phosphate (route II): step 2/2. The protein operates within nucleotide-sugar biosynthesis; UDP-N-acetyl-alpha-D-glucosamine biosynthesis; UDP-N-acetyl-alpha-D-glucosamine from N-acetyl-alpha-D-glucosamine 1-phosphate: step 1/1. It participates in bacterial outer membrane biogenesis; LPS lipid A biosynthesis. Functionally, catalyzes the last two sequential reactions in the de novo biosynthetic pathway for UDP-N-acetylglucosamine (UDP-GlcNAc). The C-terminal domain catalyzes the transfer of acetyl group from acetyl coenzyme A to glucosamine-1-phosphate (GlcN-1-P) to produce N-acetylglucosamine-1-phosphate (GlcNAc-1-P), which is converted into UDP-GlcNAc by the transfer of uridine 5-monophosphate (from uridine 5-triphosphate), a reaction catalyzed by the N-terminal domain. This is Bifunctional protein GlmU from Clostridium botulinum (strain Eklund 17B / Type B).